The following is a 294-amino-acid chain: Ribosomal RNA small subunit methyltransferase H (294 aa).

Residues 36–38 (GGH), Asp55, Phe82, Asp97, and Gln104 each bind S-adenosyl-L-methionine.

This sequence belongs to the methyltransferase superfamily. RsmH family.

The protein localises to the cytoplasm. The catalysed reaction is cytidine(1402) in 16S rRNA + S-adenosyl-L-methionine = N(4)-methylcytidine(1402) in 16S rRNA + S-adenosyl-L-homocysteine + H(+). In terms of biological role, specifically methylates the N4 position of cytidine in position 1402 (C1402) of 16S rRNA. The protein is Ribosomal RNA small subunit methyltransferase H of Synechococcus sp. (strain CC9605).